Consider the following 507-residue polypeptide: FLYWCH transcription factor 1 (507 aa).

Positions 1 to 26 (MYSPESMNSNISSPSPPSSSSLNAPS) are enriched in low complexity. Residues 1 to 51 (MYSPESMNSNISSPSPPSSSSLNAPSLADAPEVRSDDGEAETSEPSTSVTA) form a disordered region. An FLYWCH-type zinc finger spans residues 135-192 (KKTRLKVFSNGFFMTFDKLSSCQKKYFWRCEYKNTCKARMHTDIVTEKILTFIHEHNH).

Its function is as follows. Probable transcription factor. Binds to the DNA sequence motif 5'-[AG]GGCGCCG-3' in the promoters of target genes, including micro-RNA genes, in order to repress expression, and acting redundantly with flh-2. This is FLYWCH transcription factor 1 from Caenorhabditis elegans.